The primary structure comprises 464 residues: Phospho-cellobiase (464 aa).

Residue Glu-172 is the Proton donor of the active site. The active-site Nucleophile is Glu-361.

Belongs to the glycosyl hydrolase 1 family.

The sequence is that of Phospho-cellobiase (casB) from Klebsiella oxytoca.